Consider the following 861-residue polypeptide: Probable linoleate 9S-lipoxygenase 3 (861 aa).

The 128-residue stretch at 33–160 (FTDLASSLTG…NYKSDRIFFA (128 aa)) folds into the PLAT domain. The Lipoxygenase domain maps to 163–861 (PYLPSDTPEL…GKGIPNSVSI (699 aa)). Positions 220-247 (TLGGSAEYPYPRRGRTGRPPTRTDPKSE) are disordered. Positions 522, 527, 713, 717, and 861 each coordinate Fe cation.

It belongs to the lipoxygenase family. Monomer. Fe cation is required as a cofactor. Expressed in tubers and roots. Not detected in leaves, flowers, stems, shoot tips, or axillary buds.

It is found in the cytoplasm. The enzyme catalyses (9Z,12Z)-octadecadienoate + O2 = (9S)-hydroperoxy-(10E,12Z)-octadecadienoate. The protein operates within lipid metabolism; oxylipin biosynthesis. Its function is as follows. Plant lipoxygenases may be involved in a number of diverse aspects of plant physiology including growth and development, pest resistance, and senescence or responses to wounding. Catalyzes the hydroperoxidation of lipids containing a cis,cis-1,4-pentadiene structure. This chain is Probable linoleate 9S-lipoxygenase 3 (LOX1.3), found in Solanum tuberosum (Potato).